We begin with the raw amino-acid sequence, 143 residues long: Methylglyoxal synthase (143 aa).

The MGS-like domain maps to 1–143 (MTVKKIALVA…DYEAYRNRII (143 aa)). Substrate contacts are provided by residues H11, K15, 37 to 40 (TGST), and 57 to 58 (SG). D63 (proton donor/acceptor) is an active-site residue. H90 is a binding site for substrate.

Belongs to the methylglyoxal synthase family.

It catalyses the reaction dihydroxyacetone phosphate = methylglyoxal + phosphate. Catalyzes the formation of methylglyoxal from dihydroxyacetone phosphate. This Coxiella burnetii (strain Dugway 5J108-111) protein is Methylglyoxal synthase.